A 530-amino-acid polypeptide reads, in one-letter code: MKGNIMQLSHTELQSRKKKIAWWQSDALKWLVISLLSLFTCYLIVLMYAQGEYLFAIVTLILVSLGLYVFANRRAYAWRYVYPGVAGMGLFVLFPLICTIAIAFTNYSSTNQLTFERAQSVLLDRQFQTGKTFTFGLYPSDNQWRLQLTNPDDGSLFISEPFSFEATGEQKVMVAPTNTAQTSEPASLRIITQSRQALSSLVAILPDGAELRMSSLRQFSGTKPLYTLGADGKELINQQTGVKYWPNPSTGFYQAVNADGQWENEKLSPGFTVSIGWKNFLRVLHDEGIQKPFISIFIWTILFSVMSVTFTVAVGMVLACVVQWDSLKGKAIYRVMLILPYAVPSFISILIFKGLFNQSFGEINLMLSHLFGIKPAWFSDPITAKSMILIVNTWLGYPYMMILCMGLLKAIPDDLYEASAMDGAGPFQNFFRITFPLLIKPLTPLMIASFAFNFNNFVLIQLLTNGGPDMIGTSTPAGYTDLLVNYTYRVAFEGEGGQDFGLAAAIATLIFILVGALAILNLKASKMNFD.

Residues 1-26 (MKGNIMQLSHTELQSRKKKIAWWQSD) are Cytoplasmic-facing. Residues 27-49 (ALKWLVISLLSLFTCYLIVLMYA) form a helical membrane-spanning segment. Residues 50-52 (QGE) lie on the Periplasmic side of the membrane. A helical transmembrane segment spans residues 53-70 (YLFAIVTLILVSLGLYVF). At 71 to 82 (ANRRAYAWRYVY) the chain is on the cytoplasmic side. The helical transmembrane segment at 83–105 (PGVAGMGLFVLFPLICTIAIAFT) threads the bilayer. At 106-295 (NYSSTNQLTF…DEGIQKPFIS (190 aa)) the chain is on the periplasmic side. A helical transmembrane segment spans residues 296 to 318 (IFIWTILFSVMSVTFTVAVGMVL). Residues 297 to 521 (FIWTILFSVM…ILVGALAILN (225 aa)) enclose the ABC transmembrane type-1 domain. At 319-330 (ACVVQWDSLKGK) the chain is on the cytoplasmic side. A helical transmembrane segment spans residues 331–352 (AIYRVMLILPYAVPSFISILIF). At 353 to 385 (KGLFNQSFGEINLMLSHLFGIKPAWFSDPITAK) the chain is on the periplasmic side. The chain crosses the membrane as a helical span at residues 386 to 408 (SMILIVNTWLGYPYMMILCMGLL). Residues 409-428 (KAIPDDLYEASAMDGAGPFQ) are Cytoplasmic-facing. Residues 429–451 (NFFRITFPLLIKPLTPLMIASFA) form a helical membrane-spanning segment. At 452–499 (FNFNNFVLIQLLTNGGPDMIGTSTPAGYTDLLVNYTYRVAFEGEGGQD) the chain is on the periplasmic side. The chain crosses the membrane as a helical span at residues 500–522 (FGLAAAIATLIFILVGALAILNL). The Cytoplasmic segment spans residues 523–530 (KASKMNFD).

The protein belongs to the binding-protein-dependent transport system permease family. MalFG subfamily. In terms of assembly, the complex is composed of two ATP-binding proteins (MalK), two transmembrane proteins (MalG and MalF) and a solute-binding protein (MalE).

The protein localises to the cell inner membrane. Functionally, part of the ABC transporter complex MalEFGK involved in maltose/maltodextrin import. Probably responsible for the translocation of the substrate across the membrane. This Yersinia pestis protein is Maltose/maltodextrin transport system permease protein MalF (malF).